A 396-amino-acid polypeptide reads, in one-letter code: 1-deoxy-D-xylulose 5-phosphate reductoisomerase (396 aa).

Residues Thr10, Gly11, Ser12, Ile13, and Asn123 each contribute to the NADPH site. Lys124 is a binding site for 1-deoxy-D-xylulose 5-phosphate. Glu125 is a binding site for NADPH. Asp149 contacts Mn(2+). Residues Ser150, Glu151, Ser185, and His208 each coordinate 1-deoxy-D-xylulose 5-phosphate. Glu151 lines the Mn(2+) pocket. Gly214 lines the NADPH pocket. Ser221, Asn226, Lys227, and Glu230 together coordinate 1-deoxy-D-xylulose 5-phosphate. Glu230 contributes to the Mn(2+) binding site.

This sequence belongs to the DXR family. Mg(2+) serves as cofactor. The cofactor is Mn(2+).

The enzyme catalyses 2-C-methyl-D-erythritol 4-phosphate + NADP(+) = 1-deoxy-D-xylulose 5-phosphate + NADPH + H(+). It functions in the pathway isoprenoid biosynthesis; isopentenyl diphosphate biosynthesis via DXP pathway; isopentenyl diphosphate from 1-deoxy-D-xylulose 5-phosphate: step 1/6. In terms of biological role, catalyzes the NADPH-dependent rearrangement and reduction of 1-deoxy-D-xylulose-5-phosphate (DXP) to 2-C-methyl-D-erythritol 4-phosphate (MEP). The sequence is that of 1-deoxy-D-xylulose 5-phosphate reductoisomerase from Shewanella sp. (strain MR-7).